The chain runs to 86 residues: Small ribosomal subunit protein bS20 (86 aa).

The tract at residues 1-25 (MANIKSQMKRIRTNEAARKRNQSVK) is disordered.

This sequence belongs to the bacterial ribosomal protein bS20 family.

Functionally, binds directly to 16S ribosomal RNA. The polypeptide is Small ribosomal subunit protein bS20 (Nocardia farcinica (strain IFM 10152)).